A 543-amino-acid polypeptide reads, in one-letter code: CTP synthase (543 aa).

The interval 1–265 (MARYIFITGG…DDEVLAAFAI (265 aa)) is amidoligase domain. Ser13 is a binding site for CTP. Ser13 contacts UTP. 14–19 (SLGKGL) contributes to the ATP binding site. L-glutamine is bound at residue Tyr54. Asp71 provides a ligand contact to ATP. Asp71 and Glu139 together coordinate Mg(2+). CTP-binding positions include 146–148 (DIE), 186–191 (KTKPTQ), and Lys222. UTP-binding positions include 186 to 191 (KTKPTQ) and Lys222. 238–240 (RDA) is an ATP binding site. One can recognise a Glutamine amidotransferase type-1 domain in the interval 291-542 (TIAIVGKYTG…IEAALVRSRL (252 aa)). Residue Gly353 participates in L-glutamine binding. Residue Cys380 is the Nucleophile; for glutamine hydrolysis of the active site. Residues 381–384 (FGMQ), Glu404, and Arg470 contribute to the L-glutamine site. Residues His515 and Glu517 contribute to the active site.

The protein belongs to the CTP synthase family. In terms of assembly, homotetramer.

It catalyses the reaction UTP + L-glutamine + ATP + H2O = CTP + L-glutamate + ADP + phosphate + 2 H(+). The catalysed reaction is L-glutamine + H2O = L-glutamate + NH4(+). The enzyme catalyses UTP + NH4(+) + ATP = CTP + ADP + phosphate + 2 H(+). It participates in pyrimidine metabolism; CTP biosynthesis via de novo pathway; CTP from UDP: step 2/2. With respect to regulation, allosterically activated by GTP, when glutamine is the substrate; GTP has no effect on the reaction when ammonia is the substrate. The allosteric effector GTP functions by stabilizing the protein conformation that binds the tetrahedral intermediate(s) formed during glutamine hydrolysis. Inhibited by the product CTP, via allosteric rather than competitive inhibition. Its function is as follows. Catalyzes the ATP-dependent amination of UTP to CTP with either L-glutamine or ammonia as the source of nitrogen. Regulates intracellular CTP levels through interactions with the four ribonucleotide triphosphates. The sequence is that of CTP synthase from Rhodopseudomonas palustris (strain HaA2).